The primary structure comprises 177 residues: SPbeta prophage-derived uncharacterized protein YopI (177 aa).

Residues 11 to 31 form a helical membrane-spanning segment; sequence FEGIIGALLGVIVTLILTHIL.

It is found in the cell membrane. This chain is SPbeta prophage-derived uncharacterized protein YopI (yopI), found in Bacillus subtilis (strain 168).